A 229-amino-acid polypeptide reads, in one-letter code: Cytochrome c oxidase subunit 2 (229 aa).

The Mitochondrial intermembrane portion of the chain corresponds to 1 to 26; the sequence is MANWTQLGLQDASSPLMEELIYFHDY. Residues 27–48 traverse the membrane as a helical segment; it reads TLIILTLITILVFYGLASLLFS. The Mitochondrial matrix portion of the chain corresponds to 49-62; it reads SNTNRFFLEGQGLE. Residues 63–82 form a helical membrane-spanning segment; the sequence is TVWTIIPAVILIFIALPSLQ. The Mitochondrial intermembrane portion of the chain corresponds to 83–229; sequence LLYLMDEVNN…ETWVSNFITE (147 aa). Cu cation contacts are provided by histidine 161, cysteine 196, glutamate 198, cysteine 200, histidine 204, and methionine 207. Glutamate 198 contacts Mg(2+).

The protein belongs to the cytochrome c oxidase subunit 2 family. As to quaternary structure, component of the cytochrome c oxidase (complex IV, CIV), a multisubunit enzyme composed of a catalytic core of 3 subunits and several supernumerary subunits. The complex exists as a monomer or a dimer and forms supercomplexes (SCs) in the inner mitochondrial membrane with ubiquinol-cytochrome c oxidoreductase (cytochrome b-c1 complex, complex III, CIII). Requires Cu cation as cofactor.

It is found in the mitochondrion inner membrane. It catalyses the reaction 4 Fe(II)-[cytochrome c] + O2 + 8 H(+)(in) = 4 Fe(III)-[cytochrome c] + 2 H2O + 4 H(+)(out). Its function is as follows. Component of the cytochrome c oxidase, the last enzyme in the mitochondrial electron transport chain which drives oxidative phosphorylation. The respiratory chain contains 3 multisubunit complexes succinate dehydrogenase (complex II, CII), ubiquinol-cytochrome c oxidoreductase (cytochrome b-c1 complex, complex III, CIII) and cytochrome c oxidase (complex IV, CIV), that cooperate to transfer electrons derived from NADH and succinate to molecular oxygen, creating an electrochemical gradient over the inner membrane that drives transmembrane transport and the ATP synthase. Cytochrome c oxidase is the component of the respiratory chain that catalyzes the reduction of oxygen to water. Electrons originating from reduced cytochrome c in the intermembrane space (IMS) are transferred via the dinuclear copper A center (CU(A)) of subunit 2 and heme A of subunit 1 to the active site in subunit 1, a binuclear center (BNC) formed by heme A3 and copper B (CU(B)). The BNC reduces molecular oxygen to 2 water molecules using 4 electrons from cytochrome c in the IMS and 4 protons from the mitochondrial matrix. In Patiria pectinifera (Starfish), this protein is Cytochrome c oxidase subunit 2 (COII).